Reading from the N-terminus, the 212-residue chain is phospholipase A2 inhibitor and Ly6/PLAUR domain-containing protein (212 aa).

The signal sequence occupies residues 1–24 (MILFRRHRTFLLAFTLLCTLLGLG). The UPAR/Ly6 domain occupies 27-117 (LTCEVCKGSG…NSGSVPPPLN (91 aa)). Intrachain disulfides connect cysteine 29/cysteine 53, cysteine 32/cysteine 39, cysteine 46/cysteine 74, cysteine 80/cysteine 101, cysteine 102/cysteine 107, cysteine 126/cysteine 152, and cysteine 145/cysteine 173.

This sequence belongs to the CNF-like-inhibitor family.

It is found in the secreted. The polypeptide is phospholipase A2 inhibitor and Ly6/PLAUR domain-containing protein (Pinlyp) (Mus musculus (Mouse)).